The primary structure comprises 388 residues: Histone H2A.Y (388 aa).

LRR repeat units follow at residues 54–75, 76–96, and 100–121; these read SLQM…PHVP, SLIR…QYLR, and HLQT…KRLG. The 39-residue stretch at 134 to 172 folds into the LRRCT domain; sequence NPVVNTNNYRNLVFNLFPSLVILDTLDKNGIDQEKAALD. A disordered region spans residues 256 to 279; that stretch reads RKAPASRNGGVPSKAGKGKMNAFS.

Belongs to the histone H2A family. In terms of assembly, the nucleosome is a histone octamer containing two molecules each of H2A, H2B, H3 and H4 assembled in one H3-H4 heterotetramer and two H2A-H2B heterodimers. The octamer wraps approximately 147 bp of DNA.

The protein localises to the nucleus. The protein resides in the chromosome. Variant histone H2A which replaces conventional H2A in a subset of nucleosomes. Nucleosomes wrap and compact DNA into chromatin, limiting DNA accessibility to the cellular machineries which require DNA as a template. Histones thereby play a central role in transcription regulation, DNA repair, DNA replication and chromosomal stability. DNA accessibility is regulated via a complex set of post-translational modifications of histones, also called histone code, and nucleosome remodeling. The chain is Histone H2A.Y (HTAY) from Tetrahymena thermophila (strain SB210).